We begin with the raw amino-acid sequence, 146 residues long: Hemoglobin subunit delta (146 aa).

The region spanning 2–146 (HLTGEEKSAV…VATALAHKYH (145 aa)) is the Globin domain. H63 and H92 together coordinate heme b.

This sequence belongs to the globin family. In terms of assembly, heterotetramer of two delta chains and two alpha chains. In terms of tissue distribution, red blood cells.

In Ateles fusciceps (Brown-headed spider monkey), this protein is Hemoglobin subunit delta (HBD).